Reading from the N-terminus, the 345-residue chain is Erythronate-4-phosphate dehydrogenase (345 aa).

Serine 45 contributes to the substrate binding site. NAD(+) contacts are provided by aspartate 146 and threonine 174. Arginine 207 is a catalytic residue. Aspartate 227 is a binding site for NAD(+). Glutamate 232 is a catalytic residue. Histidine 249 serves as the catalytic Proton donor. Glycine 252 provides a ligand contact to NAD(+).

It belongs to the D-isomer specific 2-hydroxyacid dehydrogenase family. PdxB subfamily. Homodimer.

It is found in the cytoplasm. It catalyses the reaction 4-phospho-D-erythronate + NAD(+) = (R)-3-hydroxy-2-oxo-4-phosphooxybutanoate + NADH + H(+). It functions in the pathway cofactor biosynthesis; pyridoxine 5'-phosphate biosynthesis; pyridoxine 5'-phosphate from D-erythrose 4-phosphate: step 2/5. In terms of biological role, catalyzes the oxidation of erythronate-4-phosphate to 3-hydroxy-2-oxo-4-phosphonooxybutanoate. The protein is Erythronate-4-phosphate dehydrogenase of Ruthia magnifica subsp. Calyptogena magnifica.